Reading from the N-terminus, the 309-residue chain is Homoserine kinase (309 aa).

91 to 101 contacts ATP; it reads PIGSGLGSSAC.

It belongs to the GHMP kinase family. Homoserine kinase subfamily.

It is found in the cytoplasm. The catalysed reaction is L-homoserine + ATP = O-phospho-L-homoserine + ADP + H(+). It participates in amino-acid biosynthesis; L-threonine biosynthesis; L-threonine from L-aspartate: step 4/5. In terms of biological role, catalyzes the ATP-dependent phosphorylation of L-homoserine to L-homoserine phosphate. The sequence is that of Homoserine kinase from Buchnera aphidicola subsp. Acyrthosiphon pisum (strain 5A).